Reading from the N-terminus, the 1390-residue chain is DNA-directed RNA polymerase subunit beta (1390 aa).

It belongs to the RNA polymerase beta chain family. As to quaternary structure, the RNAP catalytic core consists of 2 alpha, 1 beta, 1 beta' and 1 omega subunit. When a sigma factor is associated with the core the holoenzyme is formed, which can initiate transcription.

It catalyses the reaction RNA(n) + a ribonucleoside 5'-triphosphate = RNA(n+1) + diphosphate. In terms of biological role, DNA-dependent RNA polymerase catalyzes the transcription of DNA into RNA using the four ribonucleoside triphosphates as substrates. This chain is DNA-directed RNA polymerase subunit beta, found in Gluconobacter oxydans (strain 621H) (Gluconobacter suboxydans).